A 173-amino-acid polypeptide reads, in one-letter code: Ribonuclease H (173 aa).

A disordered region spans residues 1–20; that stretch reads MKATSKAKTHPPGATAAKDP. The RNase H type-1 domain occupies 20–162; the sequence is PQKQVIIYTD…CDVLSKEAAG (143 aa). Residues D29, E67, D89, and D154 each contribute to the Mg(2+) site.

This sequence belongs to the RNase H family. As to quaternary structure, monomer. The cofactor is Mg(2+).

The protein localises to the cytoplasm. It catalyses the reaction Endonucleolytic cleavage to 5'-phosphomonoester.. Its function is as follows. Endonuclease that specifically degrades the RNA of RNA-DNA hybrids. This is Ribonuclease H from Syntrophus aciditrophicus (strain SB).